The following is a 238-amino-acid chain: Ribonuclease PH (238 aa).

Phosphate is bound by residues Arg86 and 124-126 (GTR).

Belongs to the RNase PH family. As to quaternary structure, homohexameric ring arranged as a trimer of dimers.

It carries out the reaction tRNA(n+1) + phosphate = tRNA(n) + a ribonucleoside 5'-diphosphate. In terms of biological role, phosphorolytic 3'-5' exoribonuclease that plays an important role in tRNA 3'-end maturation. Removes nucleotide residues following the 3'-CCA terminus of tRNAs; can also add nucleotides to the ends of RNA molecules by using nucleoside diphosphates as substrates, but this may not be physiologically important. Probably plays a role in initiation of 16S rRNA degradation (leading to ribosome degradation) during starvation. This Solibacter usitatus (strain Ellin6076) protein is Ribonuclease PH.